Consider the following 306-residue polypeptide: Non-homologous end joining protein Ku 2 (306 aa).

In terms of domain architecture, Ku spans 21–206; sequence ISFGLVNIGV…EVSKQEIDMA (186 aa). The segment at 233–306 is disordered; the sequence is LIDAKTKGTK…GSRDKTRKRA (74 aa). A compositionally biased stretch (basic residues) spans 274 to 290; sequence RTSRRKTTASASRRRSS. A compositionally biased stretch (basic and acidic residues) spans 291-300; it reads SNREKTGSRD.

This sequence belongs to the prokaryotic Ku family. In terms of assembly, homodimer. Interacts with LigD.

With LigD forms a non-homologous end joining (NHEJ) DNA repair enzyme, which repairs dsDNA breaks with reduced fidelity. Binds linear dsDNA with 5'- and 3'- overhangs but not closed circular dsDNA nor ssDNA. Recruits and stimulates the ligase activity of LigD. This is Non-homologous end joining protein Ku 2 from Saccharopolyspora erythraea (strain ATCC 11635 / DSM 40517 / JCM 4748 / NBRC 13426 / NCIMB 8594 / NRRL 2338).